A 280-amino-acid polypeptide reads, in one-letter code: uncharacterized protein (280 aa).

The signal sequence occupies residues 1 to 35 (MQGQVLKKVLKKYVHIGMCTLFLHAILLFPCVAQA).

This is an uncharacterized protein from Treponema pallidum (strain Nichols).